Reading from the N-terminus, the 293-residue chain is Protease HtpX (293 aa).

The next 2 membrane-spanning stretches (helical) occupy residues 4-24 (IALFLLTNLAVMVVFGLVLSL) and 34-54 (GLMIMALLFGFGGSFVSLLMS). A Zn(2+)-binding site is contributed by His-139. The active site involves Glu-140. His-143 contributes to the Zn(2+) binding site. A run of 2 helical transmembrane segments spans residues 158 to 178 (VVNTFVIFISRILAQLAAGFM) and 193 to 213 (LIYFAVATVLELVFGILASII). Glu-222 provides a ligand contact to Zn(2+).

It belongs to the peptidase M48B family. It depends on Zn(2+) as a cofactor.

The protein localises to the cell inner membrane. The protein is Protease HtpX of Escherichia coli (strain ATCC 8739 / DSM 1576 / NBRC 3972 / NCIMB 8545 / WDCM 00012 / Crooks).